We begin with the raw amino-acid sequence, 361 residues long: Ribosomal RNA large subunit methyltransferase M (361 aa).

Residues Ser187, 220-223 (CPGG), Asp239, Asp259, and Asp276 each bind S-adenosyl-L-methionine. The Proton acceptor role is filled by Lys305.

This sequence belongs to the class I-like SAM-binding methyltransferase superfamily. RNA methyltransferase RlmE family. RlmM subfamily. As to quaternary structure, monomer.

It is found in the cytoplasm. It carries out the reaction cytidine(2498) in 23S rRNA + S-adenosyl-L-methionine = 2'-O-methylcytidine(2498) in 23S rRNA + S-adenosyl-L-homocysteine + H(+). In terms of biological role, catalyzes the 2'-O-methylation at nucleotide C2498 in 23S rRNA. This Shewanella putrefaciens (strain CN-32 / ATCC BAA-453) protein is Ribosomal RNA large subunit methyltransferase M.